A 215-amino-acid polypeptide reads, in one-letter code: Pyrophosphatase PpaX (215 aa).

The Nucleophile role is filled by Asp-9.

This sequence belongs to the HAD-like hydrolase superfamily. PpaX family. Requires Mg(2+) as cofactor.

The enzyme catalyses diphosphate + H2O = 2 phosphate + H(+). Its function is as follows. Hydrolyzes pyrophosphate formed during P-Ser-HPr dephosphorylation by HPrK/P. Might play a role in controlling the intracellular pyrophosphate pool. The protein is Pyrophosphatase PpaX of Anoxybacillus flavithermus (strain DSM 21510 / WK1).